The chain runs to 216 residues: Adenylate kinase (216 aa).

10–15 (GAGKGT) serves as a coordination point for ATP. An NMP region spans residues 30 to 59 (STGDMLRAAVKAGTPLGLELKKVMDAGQLV). Residues Thr-31, Arg-36, 57 to 59 (QLV), 85 to 88 (GFPR), and Gln-92 contribute to the AMP site. Residues 122-159 (GRRVHLASGRTYHIQYNPPKVEGKDDETGEDLIQRDDD) form an LID region. Residues Arg-123 and 132–133 (TY) each bind ATP. AMP-binding residues include Arg-156 and Arg-167. Residue Gly-202 participates in ATP binding.

This sequence belongs to the adenylate kinase family. In terms of assembly, monomer.

The protein localises to the cytoplasm. It carries out the reaction AMP + ATP = 2 ADP. The protein operates within purine metabolism; AMP biosynthesis via salvage pathway; AMP from ADP: step 1/1. Functionally, catalyzes the reversible transfer of the terminal phosphate group between ATP and AMP. Plays an important role in cellular energy homeostasis and in adenine nucleotide metabolism. In Pseudomonas putida (strain ATCC 700007 / DSM 6899 / JCM 31910 / BCRC 17059 / LMG 24140 / F1), this protein is Adenylate kinase.